Reading from the N-terminus, the 337-residue chain is DNA-directed RNA polymerase subunit alpha (337 aa).

Positions 1–231 (MRNITISAYT…KQLSVFDKIT (231 aa)) are alpha N-terminal domain (alpha-NTD). The alpha C-terminal domain (alpha-CTD) stretch occupies residues 248–337 (NTKLLQNITD…IAELKAQNEG (90 aa)).

The protein belongs to the RNA polymerase alpha chain family. In terms of assembly, homodimer. The RNAP catalytic core consists of 2 alpha, 1 beta, 1 beta' and 1 omega subunit. When a sigma factor is associated with the core the holoenzyme is formed, which can initiate transcription.

The catalysed reaction is RNA(n) + a ribonucleoside 5'-triphosphate = RNA(n+1) + diphosphate. Functionally, DNA-dependent RNA polymerase catalyzes the transcription of DNA into RNA using the four ribonucleoside triphosphates as substrates. This is DNA-directed RNA polymerase subunit alpha from Campylobacter jejuni subsp. doylei (strain ATCC BAA-1458 / RM4099 / 269.97).